Consider the following 169-residue polypeptide: uncharacterized protein (169 aa).

2 consecutive transmembrane segments (helical) span residues 62-84 (RWGF…LLGL) and 94-116 (ALML…YWWF).

Its subcellular location is the cell membrane. This is an uncharacterized protein from Archaeoglobus fulgidus (strain ATCC 49558 / DSM 4304 / JCM 9628 / NBRC 100126 / VC-16).